The chain runs to 127 residues: UPF0102 protein Mmar10_3014 (127 aa).

It belongs to the UPF0102 family.

This Maricaulis maris (strain MCS10) (Caulobacter maris) protein is UPF0102 protein Mmar10_3014.